The sequence spans 527 residues: D-3-phosphoglycerate dehydrogenase (527 aa).

NAD(+)-binding positions include 149 to 150 (RV), Asp-169, 228 to 230 (AAR), and Asp-254. The active site involves Arg-230. Glu-259 is an active-site residue. The active-site Proton donor is His-278. An NAD(+)-binding site is contributed by 278 to 281 (HIAA). Positions 453-527 (YIISLHEDKP…GIIDATYVEL (75 aa)) constitute an ACT domain.

The protein belongs to the D-isomer specific 2-hydroxyacid dehydrogenase family.

The catalysed reaction is (2R)-3-phosphoglycerate + NAD(+) = 3-phosphooxypyruvate + NADH + H(+). It participates in amino-acid biosynthesis; L-serine biosynthesis; L-serine from 3-phospho-D-glycerate: step 1/3. This Archaeoglobus fulgidus (strain ATCC 49558 / DSM 4304 / JCM 9628 / NBRC 100126 / VC-16) protein is D-3-phosphoglycerate dehydrogenase (serA).